Here is a 367-residue protein sequence, read N- to C-terminus: UDP-N-acetylglucosamine--N-acetylmuramyl-(pentapeptide) pyrophosphoryl-undecaprenol N-acetylglucosamine transferase (367 aa).

Residues 15 to 17, N127, R163, S191, I249, and Q294 contribute to the UDP-N-acetyl-alpha-D-glucosamine site; that span reads TGG.

This sequence belongs to the glycosyltransferase 28 family. MurG subfamily.

It localises to the cell inner membrane. It catalyses the reaction di-trans,octa-cis-undecaprenyl diphospho-N-acetyl-alpha-D-muramoyl-L-alanyl-D-glutamyl-meso-2,6-diaminopimeloyl-D-alanyl-D-alanine + UDP-N-acetyl-alpha-D-glucosamine = di-trans,octa-cis-undecaprenyl diphospho-[N-acetyl-alpha-D-glucosaminyl-(1-&gt;4)]-N-acetyl-alpha-D-muramoyl-L-alanyl-D-glutamyl-meso-2,6-diaminopimeloyl-D-alanyl-D-alanine + UDP + H(+). Its pathway is cell wall biogenesis; peptidoglycan biosynthesis. Functionally, cell wall formation. Catalyzes the transfer of a GlcNAc subunit on undecaprenyl-pyrophosphoryl-MurNAc-pentapeptide (lipid intermediate I) to form undecaprenyl-pyrophosphoryl-MurNAc-(pentapeptide)GlcNAc (lipid intermediate II). The sequence is that of UDP-N-acetylglucosamine--N-acetylmuramyl-(pentapeptide) pyrophosphoryl-undecaprenol N-acetylglucosamine transferase from Burkholderia pseudomallei (strain 1710b).